Reading from the N-terminus, the 313-residue chain is Ribosomal RNA small subunit methyltransferase H (313 aa).

S-adenosyl-L-methionine is bound by residues 35-37 (GGH), Asp55, Phe81, Asp103, and Gln110.

Belongs to the methyltransferase superfamily. RsmH family.

Its subcellular location is the cytoplasm. The catalysed reaction is cytidine(1402) in 16S rRNA + S-adenosyl-L-methionine = N(4)-methylcytidine(1402) in 16S rRNA + S-adenosyl-L-homocysteine + H(+). Specifically methylates the N4 position of cytidine in position 1402 (C1402) of 16S rRNA. The polypeptide is Ribosomal RNA small subunit methyltransferase H (Pseudomonas aeruginosa (strain UCBPP-PA14)).